The primary structure comprises 919 residues: Phosphoenolpyruvate carboxylase (919 aa).

Catalysis depends on residues His138 and Lys579.

It belongs to the PEPCase type 1 family. The cofactor is Mg(2+).

The catalysed reaction is oxaloacetate + phosphate = phosphoenolpyruvate + hydrogencarbonate. Forms oxaloacetate, a four-carbon dicarboxylic acid source for the tricarboxylic acid cycle. The chain is Phosphoenolpyruvate carboxylase from Corynebacterium glutamicum (Brevibacterium saccharolyticum).